The chain runs to 619 residues: Laccase (619 aa).

The signal sequence occupies residues 1-21 (MKFLGIAALVAGLLAPSLVLG). The propeptide occupies 22-49 (APAPGTEGVNLLTPVDKRQDSQAERYGG). Cysteine 55 and cysteine 63 are joined by a disulfide. Plastocyanin-like domains are found at residues 84–207 (TRRY…IVIN) and 216–373 (VDLG…LPTN). The N-linked (GlcNAc...) asparagine glycan is linked to asparagine 139. The Cu cation site is built by histidine 144, histidine 146, histidine 189, and histidine 191. Cystine bridges form between cysteine 165–cysteine 586 and cysteine 349–cysteine 383. N-linked (GlcNAc...) asparagine glycans are attached at residues asparagine 282, asparagine 295, and asparagine 340. Asparagine 422 and asparagine 444 each carry an N-linked (GlcNAc...) asparagine glycan. A Plastocyanin-like 3 domain is found at 431 to 566 (NKPVLEYVLT…GGLSNQFLER (136 aa)). Positions 477, 480, 482, 548, 549, 550, and 554 each coordinate Cu cation. A propeptide spanning residues 607 to 619 (RSGVKAREVKMKW) is cleaved from the precursor.

The protein belongs to the multicopper oxidase family. Requires Cu cation as cofactor.

It is found in the secreted. The catalysed reaction is 4 hydroquinone + O2 = 4 benzosemiquinone + 2 H2O. Functionally, lignin degradation and detoxification of lignin-derived products. This is Laccase (lacc) from Neurospora crassa (strain ATCC 24698 / 74-OR23-1A / CBS 708.71 / DSM 1257 / FGSC 987).